Reading from the N-terminus, the 412-residue chain is Alanyl-tRNA editing protein Aarsd1-A (412 aa).

Zn(2+)-binding residues include His108, His112, Cys208, and His212.

The protein belongs to the class-II aminoacyl-tRNA synthetase family. Alax-L subfamily. It depends on Zn(2+) as a cofactor.

It localises to the cytoplasm. Functionally, functions in trans to edit the amino acid moiety from incorrectly charged tRNA(Ala). The polypeptide is Alanyl-tRNA editing protein Aarsd1-A (aarsd1-a) (Xenopus laevis (African clawed frog)).